Consider the following 39-residue polypeptide: uncharacterized protein (39 aa).

This is an uncharacterized protein from Saccharomyces cerevisiae (strain ATCC 204508 / S288c) (Baker's yeast).